A 525-amino-acid polypeptide reads, in one-letter code: Probable alpha-galactosidase A (525 aa).

An N-terminal signal peptide occupies residues 1-17; that stretch reads MHPSMTLLAILPPLVRA. C40 and C72 are oxidised to a cystine. N-linked (GlcNAc...) asparagine glycosylation is found at N43, N81, and N117. A disulfide bond links C120 and C150. The active-site Nucleophile is D148. N197 carries an N-linked (GlcNAc...) asparagine glycan. Residue D206 is the Proton donor of the active site. A Ricin B-type lectin domain is found at 402–525; sequence PPDCPMVIPT…GLPSGVDIEA (124 aa). 2 disulfides stabilise this stretch: C422-C434 and C459-C472.

It belongs to the glycosyl hydrolase 27 family.

The protein localises to the secreted. It catalyses the reaction Hydrolysis of terminal, non-reducing alpha-D-galactose residues in alpha-D-galactosides, including galactose oligosaccharides, galactomannans and galactolipids.. Functionally, hydrolyzes a variety of simple alpha-D-galactoside as well as more complex molecules such as oligosaccharides and polysaccharides. The protein is Probable alpha-galactosidase A (aglA) of Aspergillus clavatus (strain ATCC 1007 / CBS 513.65 / DSM 816 / NCTC 3887 / NRRL 1 / QM 1276 / 107).